The chain runs to 544 residues: Chaperonin GroEL 2 (544 aa).

ATP is bound by residues 29 to 32, 86 to 90, Gly413, 479 to 481, and Asp495; these read TLGP, DGTTT, and NAA.

This sequence belongs to the chaperonin (HSP60) family. Forms a cylinder of 14 subunits composed of two heptameric rings stacked back-to-back. Interacts with the co-chaperonin GroES.

It localises to the cytoplasm. It catalyses the reaction ATP + H2O + a folded polypeptide = ADP + phosphate + an unfolded polypeptide.. Together with its co-chaperonin GroES, plays an essential role in assisting protein folding. The GroEL-GroES system forms a nano-cage that allows encapsulation of the non-native substrate proteins and provides a physical environment optimized to promote and accelerate protein folding. This Prochlorococcus marinus (strain MIT 9313) protein is Chaperonin GroEL 2.